Consider the following 250-residue polypeptide: Leucyl/phenylalanyl-tRNA--protein transferase (250 aa).

It belongs to the L/F-transferase family.

The protein localises to the cytoplasm. The enzyme catalyses N-terminal L-lysyl-[protein] + L-leucyl-tRNA(Leu) = N-terminal L-leucyl-L-lysyl-[protein] + tRNA(Leu) + H(+). The catalysed reaction is N-terminal L-arginyl-[protein] + L-leucyl-tRNA(Leu) = N-terminal L-leucyl-L-arginyl-[protein] + tRNA(Leu) + H(+). It carries out the reaction L-phenylalanyl-tRNA(Phe) + an N-terminal L-alpha-aminoacyl-[protein] = an N-terminal L-phenylalanyl-L-alpha-aminoacyl-[protein] + tRNA(Phe). Functionally, functions in the N-end rule pathway of protein degradation where it conjugates Leu, Phe and, less efficiently, Met from aminoacyl-tRNAs to the N-termini of proteins containing an N-terminal arginine or lysine. The protein is Leucyl/phenylalanyl-tRNA--protein transferase of Cupriavidus taiwanensis (strain DSM 17343 / BCRC 17206 / CCUG 44338 / CIP 107171 / LMG 19424 / R1) (Ralstonia taiwanensis (strain LMG 19424)).